The primary structure comprises 698 residues: MTDSPILSPKSIAVIGASDKRGSVGATITSNIMNGFKGTVYPISPTRDTVFYKKAYKSVLDVPKSIDLAVIVIKNTLVTPVLEECGKKKIKGVIIITAGFKEVDEEGAKREQQVIDIAKKYNMQVVGPNCLGVMNLDSKTMMNSTFLKVTPKSGKIALVSQSGAICAALVEDASAQGIGFSAVVSLGNKAVMSEVDVLKILANHKQTEVIVMYLEDMGDGQEFLKVCKNITKKLKKPVLVLKSGRSPEGAKAAMSHTGALMGSDEIYDALLKQSGAIRVDTMEELFDYATAFSKQPLPSNGDLVIVSNAGGPAIISTDACSKAKIKMADITSIRKKIDEVIPPWGSSRNPVDIVGDADFNRFHNVLDRVLKHPKVGSVISMCTPSGTLNYDKLAEVIVEMSKKYKKTMLASLMGLDEGVTNREILADGNVPYYTYAEGAIRTLAAMIRFSDWVKSSPGKITKFKVNKAKAKKIFDQVKKEKRPNLLEEEGQEVLKAYGLPLPKSTLAKNEAEAVKAAKKIGYPVVMKIASPQIIHKSDAGGVKVNLTNDAEVKDAFKTIVKNAKKYNKKAEIKGVLIVEMVKGGKELIIGSKLEPGFGPVIMLGMGGIYVEVLKDVTFKLAPVTDKEADDMIASIKTQKLLQGVRGEKPSDIVKLSECIQRLSQLVSDFKEIKELDMNPVLVMEKGKGCRILDVRIGL.

The ATP-grasp domain occupies 491 to 544; that stretch reads QEVLKAYGLPLPKSTLAKNEAEAVKAAKKIGYPVVMKIASPQIIHKSDAGGVKV. Position 517 to 544 (517 to 544) interacts with ATP; it reads AKKIGYPVVMKIASPQIIHKSDAGGVKV.

The protein in the N-terminal section; belongs to the acetate CoA ligase alpha subunit family. In the C-terminal section; belongs to the acetate CoA ligase beta subunit family. The cofactor is Mg(2+). Mn(2+) serves as cofactor.

It carries out the reaction 4-hydroxybutanoate + ATP + CoA = 4-hydroxybutanoyl-CoA + ADP + phosphate. Functionally, involved in thaumarchaeal hydroxypropionate/hydroxybutyrate (HP/HB) cycle, a modified version of the autotrophic HP/HB cycle of Crenarchaeota. Catalyzes the formation of 4-hydroxybutyryl-CoA, ADP and phosphate from 4-hydroxybutyrate, coenzyme A (CoA) and ATP. Can also use acetate, propionate and butyrate, with poor catalytic efficiency. This is 4-hydroxybutyrate--CoA ligase [ADP-forming] from Nitrosopumilus maritimus (strain SCM1).